The chain runs to 373 residues: Dual-specificity RNA methyltransferase RlmN (373 aa).

The active-site Proton acceptor is glutamate 94. Positions 100-339 (EDDRATLCVS…VIVRKTRGDD (240 aa)) constitute a Radical SAM core domain. A disulfide bridge connects residues cysteine 107 and cysteine 344. The [4Fe-4S] cluster site is built by cysteine 114, cysteine 118, and cysteine 121. Residues 168–169 (GE), serine 200, 222–224 (SIH), and asparagine 301 contribute to the S-adenosyl-L-methionine site. Cysteine 344 serves as the catalytic S-methylcysteine intermediate.

It belongs to the radical SAM superfamily. RlmN family. [4Fe-4S] cluster is required as a cofactor.

It localises to the cytoplasm. The enzyme catalyses adenosine(2503) in 23S rRNA + 2 reduced [2Fe-2S]-[ferredoxin] + 2 S-adenosyl-L-methionine = 2-methyladenosine(2503) in 23S rRNA + 5'-deoxyadenosine + L-methionine + 2 oxidized [2Fe-2S]-[ferredoxin] + S-adenosyl-L-homocysteine. It catalyses the reaction adenosine(37) in tRNA + 2 reduced [2Fe-2S]-[ferredoxin] + 2 S-adenosyl-L-methionine = 2-methyladenosine(37) in tRNA + 5'-deoxyadenosine + L-methionine + 2 oxidized [2Fe-2S]-[ferredoxin] + S-adenosyl-L-homocysteine. In terms of biological role, specifically methylates position 2 of adenine 2503 in 23S rRNA and position 2 of adenine 37 in tRNAs. m2A2503 modification seems to play a crucial role in the proofreading step occurring at the peptidyl transferase center and thus would serve to optimize ribosomal fidelity. The sequence is that of Dual-specificity RNA methyltransferase RlmN from Shewanella sp. (strain W3-18-1).